Consider the following 408-residue polypeptide: Large ribosomal subunit protein uL4 (408 aa).

Positions 58-98 are disordered; the sequence is PYAVSKKAGHQTSAESWGTGRAVSRIPRVPGGGTHRAGQGA.

The protein belongs to the universal ribosomal protein uL4 family.

This Prunus armeniaca (Apricot) protein is Large ribosomal subunit protein uL4 (RPL4).